A 429-amino-acid polypeptide reads, in one-letter code: Glutamate-1-semialdehyde 2,1-aminomutase 2 (429 aa).

Lys268 bears the N6-(pyridoxal phosphate)lysine mark.

This sequence belongs to the class-III pyridoxal-phosphate-dependent aminotransferase family. HemL subfamily. Homodimer. Pyridoxal 5'-phosphate is required as a cofactor.

The protein localises to the cytoplasm. The catalysed reaction is (S)-4-amino-5-oxopentanoate = 5-aminolevulinate. Its pathway is porphyrin-containing compound metabolism; protoporphyrin-IX biosynthesis; 5-aminolevulinate from L-glutamyl-tRNA(Glu): step 2/2. The protein is Glutamate-1-semialdehyde 2,1-aminomutase 2 of Staphylococcus aureus (strain MRSA252).